Here is a 515-residue protein sequence, read N- to C-terminus: Maturase K (515 aa).

It belongs to the intron maturase 2 family. MatK subfamily.

The protein resides in the plastid. It is found in the chloroplast. In terms of biological role, usually encoded in the trnK tRNA gene intron. Probably assists in splicing its own and other chloroplast group II introns. This Pinus armandii (Chinese white pine) protein is Maturase K.